The chain runs to 230 residues: Cytidylate kinase (230 aa).

Glycine 12–threonine 20 provides a ligand contact to ATP.

This sequence belongs to the cytidylate kinase family. Type 1 subfamily.

It is found in the cytoplasm. It carries out the reaction CMP + ATP = CDP + ADP. The enzyme catalyses dCMP + ATP = dCDP + ADP. The sequence is that of Cytidylate kinase from Shewanella piezotolerans (strain WP3 / JCM 13877).